The chain runs to 468 residues: Abscisic acid 8'-hydroxylase 4 (468 aa).

A helical membrane pass occupies residues 4-24 (IWFLVVPILILCLLLVRVIVS). Residue Cys-415 participates in heme binding.

This sequence belongs to the cytochrome P450 family. The cofactor is heme. Mainly expressed in flowers. Lower expression in siliques, rosette leaves, roots and stems. Not expressed in dry seeds. Expressed in silique envelopes, but not in embryo or endosperm during the seed development.

It is found in the membrane. It catalyses the reaction 2-cis-(+)-abscisate + reduced [NADPH--hemoprotein reductase] + O2 = (+)-8'-hydroxyabscisate + oxidized [NADPH--hemoprotein reductase] + H2O + H(+). Its pathway is plant hormone degradation; abscisic acid degradation. In terms of biological role, involved in the oxidative degradation of abscisic acid, but not in the isomerization of the produced 8'-hydroxyabscisic acid (8'-OH-ABA) to (-)-phaseic acid (PA). The polypeptide is Abscisic acid 8'-hydroxylase 4 (CYP707A4) (Arabidopsis thaliana (Mouse-ear cress)).